We begin with the raw amino-acid sequence, 411 residues long: Probable indole-3-pyruvate monooxygenase YUCCA4 (411 aa).

Residue 21–26 coordinates FAD; it reads GAGPSG. 183–188 provides a ligand contact to NADP(+); the sequence is GCGNSG.

This sequence belongs to the FMO family. It depends on FAD as a cofactor. As to expression, expressed in leaves, stems, flowers, buds and siliques. Detected in the apical gynoecium and in the developing ovules.

The protein resides in the cytoplasm. It is found in the endoplasmic reticulum membrane. It carries out the reaction indole-3-pyruvate + NADPH + O2 + H(+) = (indol-3-yl)acetate + CO2 + NADP(+) + H2O. It functions in the pathway plant hormone metabolism; auxin biosynthesis. Involved in auxin biosynthesis. Both isoforms are catalitically active. Involved during embryogenesis and seedling development. Required for the formation of floral organs and vascular tissues. Belongs to the set of redundant YUCCA genes probably responsible for auxin biosynthesis in shoots. The chain is Probable indole-3-pyruvate monooxygenase YUCCA4 (YUC4) from Arabidopsis thaliana (Mouse-ear cress).